Consider the following 351-residue polypeptide: Serine/threonine-protein kinase ZRK1 (351 aa).

The 288-residue stretch at Phe-60–Leu-347 folds into the Protein kinase domain. Residues Val-66–Trp-74 and Lys-87 contribute to the ATP site. The active-site Proton acceptor is the Asp-191.

The protein belongs to the protein kinase superfamily. Ser/Thr protein kinase family. ZRK subfamily. As to quaternary structure, component of a stable high-order oligomeric complex made of RKS1 and RPP13L4/ZAR1 which recruits Xanthomonas campestris effector XopAC/AvrAC-mediated uridylylated PBL2 in the presence of ATP to form a wheel-like pentameric resistosome; this complex triggers immunity toward X.campestris in vascular tissues. Interacts with RPP13L4/ZAR1 and uridylylated PBL2. In terms of tissue distribution, expressed at high levels in germinating seeds and at lower levels in adult leaves.

It catalyses the reaction L-seryl-[protein] + ATP = O-phospho-L-seryl-[protein] + ADP + H(+). It carries out the reaction L-threonyl-[protein] + ATP = O-phospho-L-threonyl-[protein] + ADP + H(+). Serine/threonine-protein kinase that confers a broad-spectrum quantitative disease resistance (QDR) to the pathogenic biotrophic bacteria Xanthomonas campestris (e.g. pv. campestris (Xcc), pv. raphani, pv. armoriaceae and pv. incanae) by restricting bacterial spread to the vascular system from the infection site; X.campestris causes black rot disease in crops. Seems to not have any kinase activity. This is Serine/threonine-protein kinase ZRK1 from Arabidopsis thaliana (Mouse-ear cress).